The chain runs to 494 residues: Protein DETOXIFICATION 21 (494 aa).

Residue Ala-2 is modified to N-acetylalanine. The next 12 membrane-spanning stretches (helical) occupy residues 40-60, 73-95, 123-143, 158-178, 188-208, 217-237, 268-288, 297-317, 340-360, 384-404, 416-436, and 441-461; these read LWIV…VSII, LAAY…LGMA, IVLT…GPIL, IIAL…TCQM, IIAY…WLLM, GAMT…LLFV, GGML…TGNL, ALAI…GFLA, LTAV…FLFL, LLAF…VAVG, LACY…VVGL, and VWIG…VMTL.

This sequence belongs to the multi antimicrobial extrusion (MATE) (TC 2.A.66.1) family.

It is found in the membrane. This Arabidopsis thaliana (Mouse-ear cress) protein is Protein DETOXIFICATION 21.